A 413-amino-acid chain; its full sequence is Multifunctional CCA protein (413 aa).

Gly8 and Arg11 together coordinate ATP. CTP-binding residues include Gly8 and Arg11. Mg(2+) is bound by residues Asp21 and Asp23. The ATP site is built by Arg91, Arg137, and Arg140. Residues Arg91, Arg137, and Arg140 each coordinate CTP. In terms of domain architecture, HD spans 228-329; it reads TGLHTLMTVT…VKLFDSIDAW (102 aa).

It belongs to the tRNA nucleotidyltransferase/poly(A) polymerase family. Bacterial CCA-adding enzyme type 1 subfamily. Monomer. Can also form homodimers and oligomers. It depends on Mg(2+) as a cofactor. Requires Ni(2+) as cofactor.

The catalysed reaction is a tRNA precursor + 2 CTP + ATP = a tRNA with a 3' CCA end + 3 diphosphate. The enzyme catalyses a tRNA with a 3' CCA end + 2 CTP + ATP = a tRNA with a 3' CCACCA end + 3 diphosphate. In terms of biological role, catalyzes the addition and repair of the essential 3'-terminal CCA sequence in tRNAs without using a nucleic acid template. Adds these three nucleotides in the order of C, C, and A to the tRNA nucleotide-73, using CTP and ATP as substrates and producing inorganic pyrophosphate. tRNA 3'-terminal CCA addition is required both for tRNA processing and repair. Also involved in tRNA surveillance by mediating tandem CCA addition to generate a CCACCA at the 3' terminus of unstable tRNAs. While stable tRNAs receive only 3'-terminal CCA, unstable tRNAs are marked with CCACCA and rapidly degraded. In Klebsiella pneumoniae subsp. pneumoniae (strain ATCC 700721 / MGH 78578), this protein is Multifunctional CCA protein.